Consider the following 141-residue polypeptide: Large ribosomal subunit protein uL11 (141 aa).

It belongs to the universal ribosomal protein uL11 family. As to quaternary structure, part of the ribosomal stalk of the 50S ribosomal subunit. Interacts with L10 and the large rRNA to form the base of the stalk. L10 forms an elongated spine to which L12 dimers bind in a sequential fashion forming a multimeric L10(L12)X complex. Post-translationally, one or more lysine residues are methylated.

Functionally, forms part of the ribosomal stalk which helps the ribosome interact with GTP-bound translation factors. The chain is Large ribosomal subunit protein uL11 from Limosilactobacillus reuteri (strain DSM 20016) (Lactobacillus reuteri).